The primary structure comprises 522 residues: Glucose-6-phosphate 1-dehydrogenase (522 aa).

Residues 40–47 (GASGDLAK), R74, and K177 each bind NADP(+). D-glucose 6-phosphate-binding positions include K177, 207-211 (HYLGK), E245, and D264. H269 functions as the Proton acceptor in the catalytic mechanism. R364 lines the NADP(+) pocket. D-glucose 6-phosphate contacts are provided by K367 and K372. Positions 373, 377, and 401 each coordinate NADP(+). Q403 contributes to the D-glucose 6-phosphate binding site. NADP(+)-binding positions include 409 to 411 (YMK), 429 to 431 (DLT), R495, and W517.

It belongs to the glucose-6-phosphate dehydrogenase family.

The protein localises to the cytoplasm. The protein resides in the cytosol. The catalysed reaction is D-glucose 6-phosphate + NADP(+) = 6-phospho-D-glucono-1,5-lactone + NADPH + H(+). It participates in carbohydrate degradation; pentose phosphate pathway; D-ribulose 5-phosphate from D-glucose 6-phosphate (oxidative stage): step 1/3. Functionally, cytosolic glucose-6-phosphate dehydrogenase that catalyzes the first and rate-limiting step of the oxidative branch within the pentose phosphate pathway/shunt, an alternative route to glycolysis for the dissimilation of carbohydrates and a major source of reducing power and metabolic intermediates for fatty acid and nucleic acid biosynthetic processes. This is Glucose-6-phosphate 1-dehydrogenase (gspd-1) from Caenorhabditis elegans.